A 532-amino-acid polypeptide reads, in one-letter code: Beta-hexosaminidase subunit A1 (532 aa).

The signal sequence occupies residues 1-18 (MIKKIILFFAVLIAIVIG). N-linked (GlcNAc...) asparagine glycosylation is found at asparagine 72 and asparagine 79. The active-site Proton donor is the glutamate 308. Asparagine 350 and asparagine 427 each carry an N-linked (GlcNAc...) asparagine glycan.

It belongs to the glycosyl hydrolase 20 family. As to quaternary structure, dimer. In terms of processing, the N-terminus is blocked. Post-translationally, N-glycosylated.

It localises to the lysosome. The enzyme catalyses Hydrolysis of terminal non-reducing N-acetyl-D-hexosamine residues in N-acetyl-beta-D-hexosaminides.. In terms of biological role, responsible for the degradation of GM2 gangliosides, and a variety of other molecules containing terminal N-acetyl hexosamines. This enzyme plays a role during the slug stage of development in the maintenance of pseudoplasmodia of normal size. The polypeptide is Beta-hexosaminidase subunit A1 (hexa1) (Dictyostelium discoideum (Social amoeba)).